The following is a 565-amino-acid chain: Glycine/sarcosine/dimethylglycine N-methyltransferase (565 aa).

Residues 1–10 are compositionally biased toward basic and acidic residues; it reads MTKSVDDLAR. A disordered region spans residues 1 to 34; that stretch reads MTKSVDDLARGDQAGDEQDPVHREQQTFGDNPLE. S-adenosyl-L-methionine is bound by residues Y45, W53, R62, A86, D107, 134 to 135, and L152; that span reads DW. Residues N154, R187, and Y226 each contribute to the substrate site.

The protein belongs to the class I-like SAM-binding methyltransferase superfamily. Glycine N-methyltransferase family. As to quaternary structure, monomer.

The catalysed reaction is glycine + 2 S-adenosyl-L-methionine = N,N-dimethylglycine + 2 S-adenosyl-L-homocysteine + 2 H(+). It carries out the reaction sarcosine + 2 S-adenosyl-L-methionine = glycine betaine + 2 S-adenosyl-L-homocysteine + 2 H(+). The enzyme catalyses glycine + S-adenosyl-L-methionine = sarcosine + S-adenosyl-L-homocysteine + H(+). It catalyses the reaction sarcosine + S-adenosyl-L-methionine = N,N-dimethylglycine + S-adenosyl-L-homocysteine + H(+). The catalysed reaction is N,N-dimethylglycine + S-adenosyl-L-methionine = glycine betaine + S-adenosyl-L-homocysteine + H(+). It functions in the pathway amine and polyamine biosynthesis; betaine biosynthesis via glycine pathway; betaine from glycine: step 1/3. Its pathway is amine and polyamine biosynthesis; betaine biosynthesis via glycine pathway; betaine from glycine: step 2/3. The protein operates within amine and polyamine biosynthesis; betaine biosynthesis via glycine pathway; betaine from glycine: step 3/3. Functionally, catalyzes the methylation of glycine, sarcosine and dimethylglycine to sarcosine, dimethylglycine and betaine, respectively, with S-adenosylmethionine (AdoMet) acting as the methyl donor. Shows low level of activity on glycine when expressed in E.coli. The chain is Glycine/sarcosine/dimethylglycine N-methyltransferase from Actinopolyspora halophila.